The primary structure comprises 303 residues: Quinolinate synthase (303 aa).

Iminosuccinate is bound by residues His23 and Ser40. Residue Cys85 participates in [4Fe-4S] cluster binding. Iminosuccinate-binding positions include 111 to 113 and Ser128; that span reads YVN. Cys171 is a binding site for [4Fe-4S] cluster. Iminosuccinate contacts are provided by residues 197–199 and Thr214; that span reads HPE. Cys259 is a [4Fe-4S] cluster binding site.

It belongs to the quinolinate synthase family. Type 2 subfamily. [4Fe-4S] cluster is required as a cofactor.

It localises to the cytoplasm. The enzyme catalyses iminosuccinate + dihydroxyacetone phosphate = quinolinate + phosphate + 2 H2O + H(+). It participates in cofactor biosynthesis; NAD(+) biosynthesis; quinolinate from iminoaspartate: step 1/1. Catalyzes the condensation of iminoaspartate with dihydroxyacetone phosphate to form quinolinate. The polypeptide is Quinolinate synthase (Thermodesulfovibrio yellowstonii (strain ATCC 51303 / DSM 11347 / YP87)).